We begin with the raw amino-acid sequence, 266 residues long: Hydroxyethylthiazole kinase (266 aa).

M43 is a binding site for substrate. ATP is bound by residues R119 and T166. Residue G193 participates in substrate binding.

This sequence belongs to the Thz kinase family. The cofactor is Mg(2+).

It carries out the reaction 5-(2-hydroxyethyl)-4-methylthiazole + ATP = 4-methyl-5-(2-phosphooxyethyl)-thiazole + ADP + H(+). It participates in cofactor biosynthesis; thiamine diphosphate biosynthesis; 4-methyl-5-(2-phosphoethyl)-thiazole from 5-(2-hydroxyethyl)-4-methylthiazole: step 1/1. In terms of biological role, catalyzes the phosphorylation of the hydroxyl group of 4-methyl-5-beta-hydroxyethylthiazole (THZ). The sequence is that of Hydroxyethylthiazole kinase from Methanococcus maripaludis (strain C5 / ATCC BAA-1333).